We begin with the raw amino-acid sequence, 106 residues long: ATP-dependent Clp protease adapter protein ClpS (106 aa).

Residues 1-13 (MPRKTSHEHDHGL) show a composition bias toward basic and acidic residues. Residues 1 to 21 (MPRKTSHEHDHGLVVETSKPE) are disordered.

This sequence belongs to the ClpS family. As to quaternary structure, binds to the N-terminal domain of the chaperone ClpA.

Functionally, involved in the modulation of the specificity of the ClpAP-mediated ATP-dependent protein degradation. In Xanthomonas campestris pv. campestris (strain 8004), this protein is ATP-dependent Clp protease adapter protein ClpS.